The sequence spans 255 residues: Leucyl/phenylalanyl-tRNA--protein transferase (255 aa).

This sequence belongs to the L/F-transferase family.

The protein localises to the cytoplasm. It carries out the reaction N-terminal L-lysyl-[protein] + L-leucyl-tRNA(Leu) = N-terminal L-leucyl-L-lysyl-[protein] + tRNA(Leu) + H(+). The catalysed reaction is N-terminal L-arginyl-[protein] + L-leucyl-tRNA(Leu) = N-terminal L-leucyl-L-arginyl-[protein] + tRNA(Leu) + H(+). It catalyses the reaction L-phenylalanyl-tRNA(Phe) + an N-terminal L-alpha-aminoacyl-[protein] = an N-terminal L-phenylalanyl-L-alpha-aminoacyl-[protein] + tRNA(Phe). In terms of biological role, functions in the N-end rule pathway of protein degradation where it conjugates Leu, Phe and, less efficiently, Met from aminoacyl-tRNAs to the N-termini of proteins containing an N-terminal arginine or lysine. This Burkholderia thailandensis (strain ATCC 700388 / DSM 13276 / CCUG 48851 / CIP 106301 / E264) protein is Leucyl/phenylalanyl-tRNA--protein transferase.